The chain runs to 642 residues: G protein-coupled receptor kinase 1 (642 aa).

The segment at 1–202 is N-terminal; that stretch reads MEIENIVANT…LEKRPVDKHT (202 aa). The RGS domain maps to 52 to 188; the sequence is YAFVVEKQPI…AESMYFHRFL (137 aa). One can recognise a Protein kinase domain in the interval 203–470; sequence FRLYRVLGKG…AEEIRAHPFF (268 aa). Residues 209–217 and Lys-232 contribute to the ATP site; that span reads LGKGGFGEV. Asp-328 (proton acceptor) is an active-site residue. One can recognise an AGC-kinase C-terminal domain in the interval 480–545; it reads EPVPWKKMEA…GCVSIPWQSE (66 aa). Positions 612–642 are disordered; sequence VEQQQPPKTSTQTPAVRSSRAASASGRTLVI. Residues 614 to 636 show a composition bias toward low complexity; it reads QQQPPKTSTQTPAVRSSRAASAS.

This sequence belongs to the protein kinase superfamily. AGC Ser/Thr protein kinase family. GPRK subfamily.

It catalyses the reaction [G-protein-coupled receptor] + ATP = [G-protein-coupled receptor]-phosphate + ADP + H(+). In terms of biological role, specifically phosphorylates the activated forms of G protein-coupled receptors. The chain is G protein-coupled receptor kinase 1 (grk-1) from Caenorhabditis elegans.